Here is a 213-residue protein sequence, read N- to C-terminus: MKESSRLRGLYAITDSKLLADGRLLPYVEAALKGGARLLQYRDKTSDEARRLREADALQELCARHGAQLIINDDAELAARLGVGLHLGQEDGSLAAARALLGRQAIIGATCHAQLPLAEQAARDGASYVAFGRFFQSHTKPGAPAANHELLREARARIGLPIVAIGGITLDTAPSLIAEGVQMIAVIHALFAADSAAEVERRAQAFSQLFNTP.

4-amino-2-methyl-5-(diphosphooxymethyl)pyrimidine is bound by residues 40–44 and Asn72; that span reads QYRDK. Positions 73 and 91 each coordinate Mg(2+). A 4-amino-2-methyl-5-(diphosphooxymethyl)pyrimidine-binding site is contributed by Thr110. 137–139 is a binding site for 2-[(2R,5Z)-2-carboxy-4-methylthiazol-5(2H)-ylidene]ethyl phosphate; that stretch reads SHT. Lys140 is a 4-amino-2-methyl-5-(diphosphooxymethyl)pyrimidine binding site. Gly167 contributes to the 2-[(2R,5Z)-2-carboxy-4-methylthiazol-5(2H)-ylidene]ethyl phosphate binding site.

The protein belongs to the thiamine-phosphate synthase family. Mg(2+) is required as a cofactor.

It carries out the reaction 2-[(2R,5Z)-2-carboxy-4-methylthiazol-5(2H)-ylidene]ethyl phosphate + 4-amino-2-methyl-5-(diphosphooxymethyl)pyrimidine + 2 H(+) = thiamine phosphate + CO2 + diphosphate. The catalysed reaction is 2-(2-carboxy-4-methylthiazol-5-yl)ethyl phosphate + 4-amino-2-methyl-5-(diphosphooxymethyl)pyrimidine + 2 H(+) = thiamine phosphate + CO2 + diphosphate. The enzyme catalyses 4-methyl-5-(2-phosphooxyethyl)-thiazole + 4-amino-2-methyl-5-(diphosphooxymethyl)pyrimidine + H(+) = thiamine phosphate + diphosphate. It participates in cofactor biosynthesis; thiamine diphosphate biosynthesis; thiamine phosphate from 4-amino-2-methyl-5-diphosphomethylpyrimidine and 4-methyl-5-(2-phosphoethyl)-thiazole: step 1/1. Condenses 4-methyl-5-(beta-hydroxyethyl)thiazole monophosphate (THZ-P) and 2-methyl-4-amino-5-hydroxymethyl pyrimidine pyrophosphate (HMP-PP) to form thiamine monophosphate (TMP). The chain is Thiamine-phosphate synthase from Stutzerimonas stutzeri (strain A1501) (Pseudomonas stutzeri).